Consider the following 94-residue polypeptide: Small ribosomal subunit protein uS19 (94 aa).

The protein belongs to the universal ribosomal protein uS19 family.

Its function is as follows. Protein S19 forms a complex with S13 that binds strongly to the 16S ribosomal RNA. The protein is Small ribosomal subunit protein uS19 of Moorella thermoacetica (strain ATCC 39073 / JCM 9320).